A 194-amino-acid polypeptide reads, in one-letter code: Imidazole glycerol phosphate synthase subunit HisH (194 aa).

The region spanning 1-194 (MIIIDTGCAN…QLLKNFVENL (194 aa)) is the Glutamine amidotransferase type-1 domain. The active-site Nucleophile is the C75. Residues H175 and E177 contribute to the active site.

In terms of assembly, heterodimer of HisH and HisF.

It localises to the cytoplasm. It catalyses the reaction 5-[(5-phospho-1-deoxy-D-ribulos-1-ylimino)methylamino]-1-(5-phospho-beta-D-ribosyl)imidazole-4-carboxamide + L-glutamine = D-erythro-1-(imidazol-4-yl)glycerol 3-phosphate + 5-amino-1-(5-phospho-beta-D-ribosyl)imidazole-4-carboxamide + L-glutamate + H(+). It carries out the reaction L-glutamine + H2O = L-glutamate + NH4(+). It participates in amino-acid biosynthesis; L-histidine biosynthesis; L-histidine from 5-phospho-alpha-D-ribose 1-diphosphate: step 5/9. In terms of biological role, IGPS catalyzes the conversion of PRFAR and glutamine to IGP, AICAR and glutamate. The HisH subunit catalyzes the hydrolysis of glutamine to glutamate and ammonia as part of the synthesis of IGP and AICAR. The resulting ammonia molecule is channeled to the active site of HisF. This is Imidazole glycerol phosphate synthase subunit HisH from Mannheimia succiniciproducens (strain KCTC 0769BP / MBEL55E).